The primary structure comprises 787 residues: DNA ligase (787 aa).

Residues 32–36 (DVEYD), 81–82 (SL), and glutamate 121 each bind NAD(+). The N6-AMP-lysine intermediate role is filled by lysine 123. The NAD(+) site is built by arginine 144, glutamate 181, lysine 297, and lysine 321. Zn(2+)-binding residues include cysteine 415, cysteine 418, cysteine 445, and cysteine 451. The region spanning 703 to 787 (VEGLPLAGQT…RLTELGVAVD (85 aa)) is the BRCT domain.

This sequence belongs to the NAD-dependent DNA ligase family. LigA subfamily. Requires Mg(2+) as cofactor. The cofactor is Mn(2+).

It carries out the reaction NAD(+) + (deoxyribonucleotide)n-3'-hydroxyl + 5'-phospho-(deoxyribonucleotide)m = (deoxyribonucleotide)n+m + AMP + beta-nicotinamide D-nucleotide.. Functionally, DNA ligase that catalyzes the formation of phosphodiester linkages between 5'-phosphoryl and 3'-hydroxyl groups in double-stranded DNA using NAD as a coenzyme and as the energy source for the reaction. It is essential for DNA replication and repair of damaged DNA. The polypeptide is DNA ligase (Pseudomonas savastanoi pv. phaseolicola (strain 1448A / Race 6) (Pseudomonas syringae pv. phaseolicola (strain 1448A / Race 6))).